Reading from the N-terminus, the 380-residue chain is Acetylornithine deacetylase (380 aa).

His-79 lines the Zn(2+) pocket. The active site involves Asp-81. Position 109 (Asp-109) interacts with Zn(2+). Glu-139 is a catalytic residue. Zn(2+)-binding residues include Glu-140, Glu-164, and His-351.

This sequence belongs to the peptidase M20A family. ArgE subfamily. As to quaternary structure, homodimer. The cofactor is Zn(2+). Co(2+) is required as a cofactor. Glutathione serves as cofactor.

It localises to the cytoplasm. The catalysed reaction is N(2)-acetyl-L-ornithine + H2O = L-ornithine + acetate. Its pathway is amino-acid biosynthesis; L-arginine biosynthesis; L-ornithine from N(2)-acetyl-L-ornithine (linear): step 1/1. In terms of biological role, catalyzes the hydrolysis of the amide bond of N(2)-acetylated L-amino acids. Cleaves the acetyl group from N-acetyl-L-ornithine to form L-ornithine, an intermediate in L-arginine biosynthesis pathway, and a branchpoint in the synthesis of polyamines. The protein is Acetylornithine deacetylase of Myxococcus xanthus.